Reading from the N-terminus, the 379-residue chain is NADH-rubredoxin oxidoreductase (379 aa).

Intrachain disulfides connect C26–C286 and C137–C216. FAD is bound by residues 33-35, R42, A79, and Y125; that span reads NSE. Position 259 (D259) interacts with FAD.

This sequence belongs to the FAD-dependent oxidoreductase family. Monomer. The cofactor is FAD.

It carries out the reaction 2 reduced [rubredoxin] + NAD(+) + H(+) = 2 oxidized [rubredoxin] + NADH. In terms of biological role, catalyzes the NADH-dependent reduction of rubredoxin (Rd). NADPH is a very poor electron donor compared to NADH. Functions as an intermediate component in the electron transfer chain: NADH-&gt;NROR-&gt;Rd-&gt;FprA1/2. Also functions as an intermediate component in the electron transfer chains from NADH to revRbr and Dfx. Therefore, is a key electron carrier in an efficient multienzyme complex that can scavenge O(2) and reactive oxygen species (ROS), and thus plays an important role in the oxidative stress defense system in C.acetobutylicum, an obligate anaerobic bacterium. This chain is NADH-rubredoxin oxidoreductase (nroR), found in Clostridium acetobutylicum (strain ATCC 824 / DSM 792 / JCM 1419 / IAM 19013 / LMG 5710 / NBRC 13948 / NRRL B-527 / VKM B-1787 / 2291 / W).